Consider the following 405-residue polypeptide: SPbeta prophage-derived uncharacterized protein YomR (405 aa).

Residues 9 to 36 are a coiled coil; that stretch reads QLKQNNIQINSLRGSNDRAEKHMLEHEQ.

This Bacillus subtilis (strain 168) protein is SPbeta prophage-derived uncharacterized protein YomR (yomR).